Consider the following 505-residue polypeptide: Aspartyl/glutamyl-tRNA(Asn/Gln) amidotransferase subunit B (505 aa).

Belongs to the GatB/GatE family. GatB subfamily. As to quaternary structure, heterotrimer of A, B and C subunits.

It catalyses the reaction L-glutamyl-tRNA(Gln) + L-glutamine + ATP + H2O = L-glutaminyl-tRNA(Gln) + L-glutamate + ADP + phosphate + H(+). The enzyme catalyses L-aspartyl-tRNA(Asn) + L-glutamine + ATP + H2O = L-asparaginyl-tRNA(Asn) + L-glutamate + ADP + phosphate + 2 H(+). Functionally, allows the formation of correctly charged Asn-tRNA(Asn) or Gln-tRNA(Gln) through the transamidation of misacylated Asp-tRNA(Asn) or Glu-tRNA(Gln) in organisms which lack either or both of asparaginyl-tRNA or glutaminyl-tRNA synthetases. The reaction takes place in the presence of glutamine and ATP through an activated phospho-Asp-tRNA(Asn) or phospho-Glu-tRNA(Gln). The protein is Aspartyl/glutamyl-tRNA(Asn/Gln) amidotransferase subunit B of Dinoroseobacter shibae (strain DSM 16493 / NCIMB 14021 / DFL 12).